The chain runs to 153 residues: Superoxide dismutase [Cu-Zn] (153 aa).

Asn-24 carries an N-linked (GlcNAc...) asparagine glycan. Residues His-47, His-49, and His-64 each contribute to the Cu cation site. Residues Cys-58 and Cys-147 are joined by a disulfide bond. Zn(2+)-binding residues include His-64, His-72, His-81, and Asp-84. Residue His-121 participates in Cu cation binding. Positions 126-137 (DLGRGGNEESKK) are enriched in basic and acidic residues. The disordered stretch occupies residues 126–145 (DLGRGGNEESKKTGNAGPRP). Arg-144 is a substrate binding site.

This sequence belongs to the Cu-Zn superoxide dismutase family. In terms of assembly, homodimer. The cofactor is Cu cation. Requires Zn(2+) as cofactor.

The protein localises to the cytoplasm. It catalyses the reaction 2 superoxide + 2 H(+) = H2O2 + O2. Destroys radicals which are normally produced within the cells and which are toxic to biological systems. This Humicola lutea protein is Superoxide dismutase [Cu-Zn].